The primary structure comprises 43 residues: KCSTKGYAKEGCRGIDKRYWNSQCRTTQSYVRALTMDNKKRIG.

Belongs to the NGF-beta family.

The protein resides in the secreted. Its function is as follows. Promotes the survival of neuronal populations that are all located either in the central nervous system or directly connected to it. This is Neurotrophic factor BDNF (BDNF) from Macrovipera lebetinus (Levantine viper).